The following is a 337-amino-acid chain: Glyceraldehyde-3-phosphate dehydrogenase 3 (337 aa).

Residues 12–13 (RM) and Lys80 each bind NAD(+). D-glyceraldehyde 3-phosphate contacts are provided by residues 152 to 154 (SCT) and Thr183. Cys153 (nucleophile) is an active-site residue. Asn184 lines the NAD(+) pocket. D-glyceraldehyde 3-phosphate-binding positions include Arg198, 211–212 (TG), and Arg234. Residue Asn317 participates in NAD(+) binding.

It belongs to the glyceraldehyde-3-phosphate dehydrogenase family. Homotetramer.

It localises to the cytoplasm. It catalyses the reaction D-glyceraldehyde 3-phosphate + phosphate + NAD(+) = (2R)-3-phospho-glyceroyl phosphate + NADH + H(+). It participates in carbohydrate degradation; glycolysis; pyruvate from D-glyceraldehyde 3-phosphate: step 1/5. The protein operates within carbohydrate biosynthesis; gluconeogenesis. Functionally, catalyzes the oxidative phosphorylation of glyceraldehyde 3-phosphate (G3P) to 1,3-bisphosphoglycerate (BPG) using the cofactor NAD. The first reaction step involves the formation of a hemiacetal intermediate between G3P and a cysteine residue, and this hemiacetal intermediate is then oxidized to a thioester, with concomitant reduction of NAD to NADH. The reduced NADH is then exchanged with the second NAD, and the thioester is attacked by a nucleophilic inorganic phosphate to produce BPG. The chain is Glyceraldehyde-3-phosphate dehydrogenase 3 (gap3) from Nostoc sp. (strain PCC 7120 / SAG 25.82 / UTEX 2576).